We begin with the raw amino-acid sequence, 96 residues long: Small ribosomal subunit protein uS19 (96 aa).

Residues 1 to 30 form a disordered region; sequence MARSIKKGPFADKHLTKKVEDANKGNKKSV. Over residues 9–24 the composition is skewed to basic and acidic residues; it reads PFADKHLTKKVEDANK.

It belongs to the universal ribosomal protein uS19 family.

In terms of biological role, protein S19 forms a complex with S13 that binds strongly to the 16S ribosomal RNA. In Anaeromyxobacter sp. (strain Fw109-5), this protein is Small ribosomal subunit protein uS19.